The chain runs to 510 residues: ATP synthase subunit alpha (510 aa).

An ATP-binding site is contributed by 169-176; the sequence is GDRQTGKT.

It belongs to the ATPase alpha/beta chains family. F-type ATPases have 2 components, CF(1) - the catalytic core - and CF(0) - the membrane proton channel. CF(1) has five subunits: alpha(3), beta(3), gamma(1), delta(1), epsilon(1). CF(0) has four main subunits: a(1), b(1), b'(1) and c(9-12).

It is found in the cell inner membrane. It carries out the reaction ATP + H2O + 4 H(+)(in) = ADP + phosphate + 5 H(+)(out). In terms of biological role, produces ATP from ADP in the presence of a proton gradient across the membrane. The alpha chain is a regulatory subunit. This is ATP synthase subunit alpha from Rhodopseudomonas palustris (strain BisB18).